The chain runs to 806 residues: ATP-dependent zinc metalloprotease FTSH 11, chloroplastic/mitochondrial (806 aa).

A chloroplast and mitochondrion-targeting transit peptide spans 1-63 (MSSSTLQASL…RFRPLPCSLR (63 aa)). Basic and acidic residues predominate over residues 106-116 (FVGGEETKSGG). A disordered region spans residues 106–130 (FVGGEETKSGGEEAEVSNGVTEGKE). The chain crosses the membrane as a helical span at residues 301–321 (LVSTILFTVAVGLVWIMGAAA). 402-409 (GAPGTGKT) contributes to the ATP binding site. Residue H620 participates in Zn(2+) binding. E621 is a catalytic residue. Zn(2+) is bound by residues H624 and D698.

In the N-terminal section; belongs to the AAA ATPase family. The protein in the C-terminal section; belongs to the peptidase M41 family. In terms of assembly, homooligomer. Requires Zn(2+) as cofactor.

It is found in the mitochondrion inner membrane. The protein localises to the plastid. Its subcellular location is the chloroplast thylakoid membrane. Its function is as follows. Probable ATP-dependent zinc metallopeptidase. Involved in the assembly and/or stability of the complexes I and V. Involved in thermotolerance but not in high light stress resistance or in the assembly/stability of the complexes I and V of the mitochondrial oxidative phosphorylation system. This Arabidopsis thaliana (Mouse-ear cress) protein is ATP-dependent zinc metalloprotease FTSH 11, chloroplastic/mitochondrial (FTSH11).